Consider the following 843-residue polypeptide: Protein P (843 aa).

Residues 1 to 177 (MPLSYQHFRK…FCGSPYSWEQ (177 aa)) form a terminal protein domain (TP) region. A spacer region spans residues 178–346 (DLQHGRLVFQ…YCLSHIVNLI (169 aa)). Residues 219–269 (RKSRLGPQPAQGQLAGRQQGGSGSIRARVHPSPWGTVGVEPSGSGPTHNCA) are disordered. A compositionally biased stretch (low complexity) spans 223–235 (LGPQPAQGQLAGR). Positions 347-690 (EDWGPCTEHG…YLNLYPVARQ (344 aa)) are polymerase/reverse transcriptase domain (RT). The region spanning 357–600 (EHRIRTPRTP…YSLNFMGYVI (244 aa)) is the Reverse transcriptase domain. Residues D429, D551, and D552 each coordinate Mg(2+).

The protein belongs to the hepadnaviridae P protein family.

The catalysed reaction is DNA(n) + a 2'-deoxyribonucleoside 5'-triphosphate = DNA(n+1) + diphosphate. It catalyses the reaction Endonucleolytic cleavage to 5'-phosphomonoester.. With respect to regulation, activated by host HSP70 and HSP40 in vitro to be able to bind the epsilon loop of the pgRNA. Because deletion of the RNase H region renders the protein partly chaperone-independent, the chaperones may be needed indirectly to relieve occlusion of the RNA-binding site by this domain. Inhibited by several reverse-transcriptase inhibitors: Lamivudine, Adefovir and Entecavir. Multifunctional enzyme that converts the viral RNA genome into dsDNA in viral cytoplasmic capsids. This enzyme displays a DNA polymerase activity that can copy either DNA or RNA templates, and a ribonuclease H (RNase H) activity that cleaves the RNA strand of RNA-DNA heteroduplexes in a partially processive 3'- to 5'-endonucleasic mode. Neo-synthesized pregenomic RNA (pgRNA) are encapsidated together with the P protein, and reverse-transcribed inside the nucleocapsid. Initiation of reverse-transcription occurs first by binding the epsilon loop on the pgRNA genome, and is initiated by protein priming, thereby the 5'-end of (-)DNA is covalently linked to P protein. Partial (+)DNA is synthesized from the (-)DNA template and generates the relaxed circular DNA (RC-DNA) genome. After budding and infection, the RC-DNA migrates in the nucleus, and is converted into a plasmid-like covalently closed circular DNA (cccDNA). The activity of P protein does not seem to be necessary for cccDNA generation, and is presumably released from (+)DNA by host nuclear DNA repair machinery. The chain is Protein P from Hepatitis B virus genotype B2 subtype adw (isolate China/patient4/1996) (HBV-B).